A 164-amino-acid chain; its full sequence is Respiratory growth induced protein 2 (164 aa).

This sequence belongs to the RGI1 family.

It is found in the cytoplasm. Its function is as follows. Involved in the control of energetic metabolism and significantly contribute to cell fitness, especially under respiratory growth conditions. This Saccharomyces cerevisiae (strain JAY291) (Baker's yeast) protein is Respiratory growth induced protein 2 (RGI2).